Reading from the N-terminus, the 150-residue chain is Large ribosomal subunit protein bL9 (150 aa).

The protein belongs to the bacterial ribosomal protein bL9 family.

Binds to the 23S rRNA. In Verminephrobacter eiseniae (strain EF01-2), this protein is Large ribosomal subunit protein bL9.